Consider the following 346-residue polypeptide: N-acetyl-gamma-glutamyl-phosphate reductase (346 aa).

Cys-150 is a catalytic residue.

It belongs to the NAGSA dehydrogenase family. Type 1 subfamily.

It is found in the cytoplasm. It catalyses the reaction N-acetyl-L-glutamate 5-semialdehyde + phosphate + NADP(+) = N-acetyl-L-glutamyl 5-phosphate + NADPH + H(+). It functions in the pathway amino-acid biosynthesis; L-arginine biosynthesis; N(2)-acetyl-L-ornithine from L-glutamate: step 3/4. Its function is as follows. Catalyzes the NADPH-dependent reduction of N-acetyl-5-glutamyl phosphate to yield N-acetyl-L-glutamate 5-semialdehyde. The chain is N-acetyl-gamma-glutamyl-phosphate reductase from Moorella thermoacetica (strain ATCC 39073 / JCM 9320).